Consider the following 633-residue polypeptide: uncharacterized protein (633 aa).

Positions 12 to 43 are disordered; the sequence is ESGTNNYSDTIANGNTLPPRSKKGHSGRRKRS. Over residues 13 to 29 the composition is skewed to polar residues; sequence SGTNNYSDTIANGNTLP. Residues 31 to 42 are compositionally biased toward basic residues; it reads RSKKGHSGRRKR. Helical transmembrane passes span 99–118 and 217–233; these read ILFGLCCTGTFLKLLISSAL and NCAFPMTLNLALLITAC. The tract at residues 593–612 is disordered; it reads DAETNKATGSAKSENIETKS.

It is found in the membrane. This is an uncharacterized protein from Saccharomyces cerevisiae (strain ATCC 204508 / S288c) (Baker's yeast).